The following is a 339-amino-acid chain: Phenylalanine--tRNA ligase alpha subunit (339 aa).

Glu-254 provides a ligand contact to Mg(2+).

This sequence belongs to the class-II aminoacyl-tRNA synthetase family. Phe-tRNA synthetase alpha subunit type 1 subfamily. In terms of assembly, tetramer of two alpha and two beta subunits. Mg(2+) is required as a cofactor.

The protein resides in the cytoplasm. It catalyses the reaction tRNA(Phe) + L-phenylalanine + ATP = L-phenylalanyl-tRNA(Phe) + AMP + diphosphate + H(+). The sequence is that of Phenylalanine--tRNA ligase alpha subunit from Lachnoclostridium phytofermentans (strain ATCC 700394 / DSM 18823 / ISDg) (Clostridium phytofermentans).